A 129-amino-acid polypeptide reads, in one-letter code: Large ribosomal subunit protein bL12c (129 aa).

Over residues Lys101 to Gly123 the composition is skewed to basic and acidic residues. The disordered stretch occupies residues Lys101 to Lys129.

Belongs to the bacterial ribosomal protein bL12 family. As to quaternary structure, homodimer. Part of the ribosomal stalk of the 50S ribosomal subunit. Forms a multimeric L10(L12)X complex, where L10 forms an elongated spine to which 2 to 4 L12 dimers bind in a sequential fashion. Binds GTP-bound translation factors.

The protein localises to the plastid. Its subcellular location is the chloroplast. In terms of biological role, forms part of the ribosomal stalk which helps the ribosome interact with GTP-bound translation factors. Is thus essential for accurate translation. This is Large ribosomal subunit protein bL12c from Guillardia theta (Cryptophyte).